A 350-amino-acid chain; its full sequence is Iron-regulated surface determinant protein A (350 aa).

An N-terminal signal peptide occupies residues 1–46 (MTKHYLNSKYQSEQRSSAMKKITMGTASIILGSLVYIGADSQQVNA). An NEAT domain is found at 62–184 (SQATSQPINF…EFEKAIPTLA (123 aa)). Residues Lys-75, Ser-82, and Tyr-166 each coordinate heme. The interval 188-314 (KPNNVKPVQP…KQASKAKELP (127 aa)) is disordered. Over residues 203 to 214 (KTPTEQTKPVQP) the composition is skewed to low complexity. Polar residues-rich tracts occupy residues 252-268 (AHTV…NKVQ) and 278-296 (KSES…QTNK). The span at 299–314 (KHNETPKQASKAKELP) shows a compositional bias: basic and acidic residues. The LPXTG sorting signal signature appears at 313 to 317 (LPKTG). Pentaglycyl murein peptidoglycan amidated threonine is present on Thr-316. A propeptide spans 317–350 (GLTSVDNFISTVAFATLALLGSLSLLLFKRKESK) (removed by sortase A).

Belongs to the IsdA family. Monomer. Interacts with IsdC. Interacts with IsdB.

The protein resides in the secreted. It localises to the cell wall. Functionally, cell wall-anchored surface receptor that participates in the extraction of heme from oxidized methemoglobin/metHb to enable growth on hemoglobin as a sole iron source. Receives heme from IsdB and transfers it to IsdC. Also plays a role in the inhibition of host immune response. Protects S.aureus against the bactericidal protease activity of apolactoferrin. Decreases bacterial cellular hydrophobicity, which renders S.aureus resistant to bactericidal human skin fatty acids as well as to beta-defensins and cathelicidin. Also binds fibronectin and chains B-beta and gamma of fibrinogen, promoting clumping of S.aureus with fibrinogen. Involved in adherence of S.aureus to human desquamated nasal epithelial cells and is required for nasal colonization. This is Iron-regulated surface determinant protein A (isdA) from Staphylococcus aureus (strain Mu3 / ATCC 700698).